The primary structure comprises 212 residues: High frequency lysogenization protein HflD homolog (212 aa).

This sequence belongs to the HflD family.

It localises to the cytoplasm. Its subcellular location is the cell inner membrane. In Stutzerimonas stutzeri (strain A1501) (Pseudomonas stutzeri), this protein is High frequency lysogenization protein HflD homolog.